The primary structure comprises 177 residues: Thymidine kinase (177 aa).

Residue 11–18 participates in ATP binding; sequence GPMFSGKS. E83 functions as the Proton acceptor in the catalytic mechanism. F113 contacts substrate. Zn(2+) is bound by residues C138 and C141. A substrate-binding site is contributed by 157-161; that stretch reads IEIIG. Residues C170 and C173 each contribute to the Zn(2+) site.

It belongs to the thymidine kinase family. As to quaternary structure, homotetramer. Two molecules of substrate bind to each enzyme tetramer.

It carries out the reaction thymidine + ATP = dTMP + ADP + H(+). Its function is as follows. Phosphorylates thymidine and thymidine analogs, such as azidothymidine (AZT). Part of the salvage pathway for pyrimidine deoxyribonucleotide synthesis. In Vaccinia virus (strain Tian Tan) (VACV), this protein is Thymidine kinase (OPG101).